The sequence spans 168 residues: 6,7-dimethyl-8-ribityllumazine synthase (168 aa).

5-amino-6-(D-ribitylamino)uracil is bound by residues phenylalanine 24, 58–60 (ALE), and 82–84 (AVI). Residue 87 to 88 (ET) participates in (2S)-2-hydroxy-3-oxobutyl phosphate binding. Histidine 90 acts as the Proton donor in catalysis. Asparagine 115 serves as a coordination point for 5-amino-6-(D-ribitylamino)uracil. Arginine 129 provides a ligand contact to (2S)-2-hydroxy-3-oxobutyl phosphate.

The protein belongs to the DMRL synthase family.

The enzyme catalyses (2S)-2-hydroxy-3-oxobutyl phosphate + 5-amino-6-(D-ribitylamino)uracil = 6,7-dimethyl-8-(1-D-ribityl)lumazine + phosphate + 2 H2O + H(+). It participates in cofactor biosynthesis; riboflavin biosynthesis; riboflavin from 2-hydroxy-3-oxobutyl phosphate and 5-amino-6-(D-ribitylamino)uracil: step 1/2. Functionally, catalyzes the formation of 6,7-dimethyl-8-ribityllumazine by condensation of 5-amino-6-(D-ribitylamino)uracil with 3,4-dihydroxy-2-butanone 4-phosphate. This is the penultimate step in the biosynthesis of riboflavin. This chain is 6,7-dimethyl-8-ribityllumazine synthase, found in Paraburkholderia xenovorans (strain LB400).